Consider the following 206-residue polypeptide: Urease accessory protein UreG (206 aa).

Residue 14–21 (GPVGSGKT) participates in GTP binding.

Belongs to the SIMIBI class G3E GTPase family. UreG subfamily. Homodimer. UreD, UreF and UreG form a complex that acts as a GTP-hydrolysis-dependent molecular chaperone, activating the urease apoprotein by helping to assemble the nickel containing metallocenter of UreC. The UreE protein probably delivers the nickel.

It localises to the cytoplasm. Facilitates the functional incorporation of the urease nickel metallocenter. This process requires GTP hydrolysis, probably effectuated by UreG. The sequence is that of Urease accessory protein UreG from Aliivibrio fischeri (strain ATCC 700601 / ES114) (Vibrio fischeri).